Reading from the N-terminus, the 302-residue chain is UDP-N-acetylenolpyruvoylglucosamine reductase (302 aa).

The 166-residue stretch at 27 to 192 (KTGGPADYVA…VSVTFGLKPG (166 aa)) folds into the FAD-binding PCMH-type domain. Arginine 171 is an active-site residue. Residue serine 221 is the Proton donor of the active site. Glutamate 291 is a catalytic residue.

The protein belongs to the MurB family. FAD serves as cofactor.

It localises to the cytoplasm. The enzyme catalyses UDP-N-acetyl-alpha-D-muramate + NADP(+) = UDP-N-acetyl-3-O-(1-carboxyvinyl)-alpha-D-glucosamine + NADPH + H(+). The protein operates within cell wall biogenesis; peptidoglycan biosynthesis. In terms of biological role, cell wall formation. This is UDP-N-acetylenolpyruvoylglucosamine reductase from Lactiplantibacillus plantarum (strain ATCC BAA-793 / NCIMB 8826 / WCFS1) (Lactobacillus plantarum).